Reading from the N-terminus, the 864-residue chain is Leucine--tRNA ligase (864 aa).

The short motif at 42-52 (PYPSGKLHMGH) is the 'HIGH' region element. Residues 624-628 (KMSKS) carry the 'KMSKS' region motif. Lysine 627 provides a ligand contact to ATP.

It belongs to the class-I aminoacyl-tRNA synthetase family.

Its subcellular location is the cytoplasm. It catalyses the reaction tRNA(Leu) + L-leucine + ATP = L-leucyl-tRNA(Leu) + AMP + diphosphate. This chain is Leucine--tRNA ligase, found in Burkholderia ambifaria (strain ATCC BAA-244 / DSM 16087 / CCUG 44356 / LMG 19182 / AMMD) (Burkholderia cepacia (strain AMMD)).